The primary structure comprises 267 residues: Ribosomal RNA large subunit methyltransferase E (267 aa).

Residues glycine 50, tryptophan 52, aspartate 68, aspartate 84, and aspartate 109 each contribute to the S-adenosyl-L-methionine site. The active-site Proton acceptor is the lysine 149. The region spanning 196-255 is the TRAM domain; that stretch reads PLKIDDKFDVTIKKIGAKGNGIAFVEDFVVFMQDEVKKGENVRIKIVDVKPEFAFAIVIG.

It belongs to the class I-like SAM-binding methyltransferase superfamily. RNA methyltransferase RlmE family.

Its subcellular location is the cytoplasm. It carries out the reaction uridine(2552) in 23S rRNA + S-adenosyl-L-methionine = 2'-O-methyluridine(2552) in 23S rRNA + S-adenosyl-L-homocysteine + H(+). Functionally, specifically methylates the uridine in position 2552 of 23S rRNA at the 2'-O position of the ribose in the fully assembled 50S ribosomal subunit. This chain is Ribosomal RNA large subunit methyltransferase E, found in Methanococcoides burtonii (strain DSM 6242 / NBRC 107633 / OCM 468 / ACE-M).